The following is a 341-amino-acid chain: Heat-inducible transcription repressor HrcA (341 aa).

This sequence belongs to the HrcA family.

Functionally, negative regulator of class I heat shock genes (grpE-dnaK-dnaJ and groELS operons). Prevents heat-shock induction of these operons. The sequence is that of Heat-inducible transcription repressor HrcA from Leptothrix cholodnii (strain ATCC 51168 / LMG 8142 / SP-6) (Leptothrix discophora (strain SP-6)).